We begin with the raw amino-acid sequence, 235 residues long: Glial cell line-derived neurotrophic factor (235 aa).

An N-terminal signal peptide occupies residues 1–19; that stretch reads MKLWDILATCLLLLSSVST. Residues 20-87 constitute a propeptide that is removed on maturation; that stretch reads RPLFHKLQPS…DFIEATLGRL (68 aa). 2 disordered regions span residues 34–60 and 91–137; these read VRSESPALDPIIDSQPETSNPKQASME and SDVE…RVKG. The segment covering 119–128 has biased composition (basic residues); that stretch reads GERKRSRGRA. 3 cysteine pairs are disulfide-bonded: cysteine 142-cysteine 203, cysteine 169-cysteine 232, and cysteine 173-cysteine 234. Asparagine 150 and asparagine 186 each carry an N-linked (GlcNAc...) asparagine glycan.

Belongs to the TGF-beta family. GDNF subfamily. In terms of assembly, homodimer; disulfide-linked. Interacts with GFRA1 coreceptor and RET: forms a 2:2:2 ternary complex composed of GDNF ligand, GFRA1 and RET receptor. As to expression, first expressed at 14 hours post-fertilization (hpf) in the ventral half of anterior somites and in intermediate mesoderm. Ventral somitic expression persists and extends more posteriorly over the next 12 hours. Expressed throughout the ventral trunk mesoderm and endoderm at 24 hpf. By 30 hpf, somitic expression ceases and by 36 hpf, expression becomes restricted to the endodermal cells forming the gut, with expression along the whole length of the developing gut tube at 72 hpf.

It localises to the secreted. Neurotrophic factor that enhances survival and morphological differentiation of dopaminergic neurons and increases their high-affinity dopamine uptake. Acts by binding to its coreceptor, GFRA1, leading to autophosphorylation and activation of the RET receptor. The protein is Glial cell line-derived neurotrophic factor of Danio rerio (Zebrafish).